The chain runs to 245 residues: Lytic switch protein BZLF1 (245 aa).

Residues 1-167 (MMDPNSTSED…RTRKPLQPES (167 aa)) are transactivation. Phosphothreonine is present on residues Thr14 and Thr159. The tract at residues 140-167 (QLADIGAPQPAPAAAPARRTRKPLQPES) is disordered. A Bipartite nuclear localization signal motif is present at residues 157-194 (RRTRKPLQPESLEECDSELDIKRYKNRVASRKCRAKFK). A phosphoserine mark is found at Ser167, Ser173, and Ser186. Residues 178 to 195 (KRYKNRVASRKCRAKFKH) form a basic motif region. Residues 178 to 228 (KRYKNRVASRKCRAKFKHLLQHYREVASAKSSENDRLRLLLKQMCPSLDVD) form the bZIP domain. The leucine-zipper stretch occupies residues 196–228 (LLQHYREVASAKSSENDRLRLLLKQMCPSLDVD). Residues 229–245 (SIIPRTPDVLHEDLLNF) are accessory activation domain.

It belongs to the bZIP family. Homodimer. Interacts (via b-ZIP domain) with the DNA polymerase processivity factor BMRF1 (via N-terminus); this interaction may inhibit BZLF1-induced transcription of the BMRF1 promoter. Interacts with human UBN1, CRTC2 and RACK1. Interacts (via N-terminus) with human PAX5 (via N-terminus); this interaction inhibits BZLF1-mediated lytic viral reactivation. Interacts (via leucine-zipper domain) with host CEBPA; this interaction induces G1 host cell cycle arrest. Interacts (via C-terminus) with host TP53BP1 (via C-terminus); this interaction is involved in the activation of the viral lytic cycle. Interacts with host chromatin-remodeling ATPase INO80; this interaction participates to the activation of early lytic viral genes by BZLF1. Interacts with host regulator of chromatin SMARCA5/hSNF2H; this interaction participates to the activation of early lytic viral genes by BZLF1. Interacts with host PLSCR1/Phospholipid scramblase 1; this interaction negatively regulates the transcriptional regulatory activity of BZLF1 by preventing the formation of the BZLF1-CBP complex.

It localises to the host nucleus. Transcription factor that acts as a molecular switch to induce the transition from the latent to the lytic or productive phase of the virus cycle. Mediates the switch from the latent to the lytic cycle of infection in cells containing a highly methylated viral genome. Probably binds to silenced chromatin and recruits host chromatin-remodeling enzymes. Regulates this switch by binding to 2 types of ZEBRA response elements (ZREs): the CpG-free AP-1 like elements (latency) and the methylated CpG-containing elements (lytic replication). Activates preferentially the methylated forms of the viral lytic R (BRLF1) and Na (BRRF1) gene promoters, the latters being the first genes activated during Z-mediated reactivation in latently infected cells. BZLF1 and BRLF1 act together to trigger lytic replication. Also binds the lytic origin of replication, oriLyt. Induces G1 cell cycle arrest by stabilizing the host CCAAT/enhancer binding protein CEBPA. This function is important because the lytic cycle preferentially takes place in host cells arrested in G1. The chain is Lytic switch protein BZLF1 from Epstein-Barr virus (strain AG876) (HHV-4).